We begin with the raw amino-acid sequence, 398 residues long: Arylacetamide deacetylase (398 aa).

The Cytoplasmic segment spans residues 1 to 5 (MGRTI). The chain crosses the membrane as a helical; Signal-anchor for type II membrane protein span at residues 6 to 26 (FLLISVVLVAYYIYIPLPDDI). Residues 27 to 398 (EEPWKIILGN…QYLNWLHKNL (372 aa)) lie on the Lumenal side of the membrane. N-linked (GlcNAc...) asparagine glycosylation is present at Asn-77. The Involved in the stabilization of the negatively charged intermediate by the formation of the oxyanion hole signature appears at 110–112 (HGG). Residues Cys-115 and Cys-339 are joined by a disulfide bond. Residue Ser-188 is part of the active site. 3 N-linked (GlcNAc...) asparagine glycosylation sites follow: Asn-192, Asn-281, and Asn-324. Residues Asp-342 and His-372 contribute to the active site.

Belongs to the 'GDXG' lipolytic enzyme family. As to expression, highest levels in liver with lower levels in jejunum, kidney and testis.

It localises to the endoplasmic reticulum membrane. Its subcellular location is the microsome membrane. It carries out the reaction a triacylglycerol + H2O = a diacylglycerol + a fatty acid + H(+). In terms of biological role, displays cellular triglyceride lipase activity in liver, increases the levels of intracellular fatty acids derived from the hydrolysis of newly formed triglyceride stores and plays a role in very low-density lipoprotein assembly. Displays serine esterase activity in liver. Deacetylates a variety of arylacetamide substrates, including xenobiotic compounds and procarcinogens, converting them to the primary arylamide compounds and increasing their toxicity. In Rattus norvegicus (Rat), this protein is Arylacetamide deacetylase (Aadac).